Here is a 501-residue protein sequence, read N- to C-terminus: Solute carrier family 2, facilitated glucose transporter member 5 (501 aa).

At methionine 1 the chain carries N-acetylmethionine. The Cytoplasmic segment spans residues 1 to 18 (MEPQDPVKREGRLTPVIV). The chain crosses the membrane as a helical span at residues 19–39 (LATLIAAFGSSFQYGYNVATI). A D-fructose-binding site is contributed by tyrosine 32. Over 40 to 68 (NSPSEFMKDFYNYTYYDRVGEYMNEFYLT) the chain is Extracellular. The N-linked (GlcNAc...) asparagine glycan is linked to asparagine 51. A helical transmembrane segment spans residues 69-91 (LLWSVTVSMFPFGGFLGSLMVGP). Topologically, residues 92–98 (LVNNLGR) are cytoplasmic. Residues 99-119 (KGTLLFNNIFSIVPALLMGFS) traverse the membrane as a helical segment. Over 120–126 (DLAKSFE) the chain is Extracellular. The chain crosses the membrane as a helical span at residues 127 to 149 (MIIVARVLVGICAGLSSNVVPMY). At 150 to 161 (LGELAPKNWRGA) the chain is on the cytoplasmic side. Residues 162–182 (LGVVPQLFITIGILVAQIFGL) form a helical membrane-spanning segment. Glutamine 167 serves as a coordination point for D-fructose. Residues 183–192 (RSLLANEEGW) lie on the Extracellular side of the membrane. Residues 193–213 (PILLGLTGIPAVLQLLFLPFF) traverse the membrane as a helical segment. The Cytoplasmic portion of the chain corresponds to 214–277 (PESPRYLLIQ…LFKMRSLRWQ (64 aa)). Residues 278 to 298 (VISIIVLMAGQQLSGVNAIYY) traverse the membrane as a helical segment. Residues glutamine 288 and 296 to 298 (IYY) contribute to the D-fructose site. Residues 299–313 (YADQIYLSAGVKEDD) are Extracellular-facing. Residues 314–334 (VQYVTAGTGAVNVLITVCAIF) form a helical membrane-spanning segment. Over 335 to 342 (VVELMGRR) the chain is Cytoplasmic. A helical membrane pass occupies residues 343–363 (FLLLLGFSVCFTACCVLTGAL). The Extracellular segment spans residues 364–371 (AMQDVISW). The chain crosses the membrane as a helical span at residues 372 to 394 (MPYVSIACVISYVIGHALGPSPI). Histidine 387 is a binding site for D-fructose. At 395-412 (PALLVTEIFLQSSRPAAY) the chain is on the cytoplasmic side. The chain crosses the membrane as a helical span at residues 413–433 (MVAGTVHWLSNFTVGLVFPFI). 419–420 (HW) is a binding site for D-fructose. Over 434 to 439 (QVGLGA) the chain is Extracellular. A helical transmembrane segment spans residues 440-460 (YSFVIFAVICFLTTVYIFLII). Over 461 to 501 (PETKSKTFIEINQIFIKMNKVPGVHPEKEELKEFPPSTARQ) the chain is Cytoplasmic.

It belongs to the major facilitator superfamily. Sugar transporter (TC 2.A.1.1) family. Glucose transporter subfamily.

It localises to the apical cell membrane. The protein resides in the cell membrane. It is found in the sarcolemma. It catalyses the reaction D-fructose(out) = D-fructose(in). Its function is as follows. Functions as a fructose transporter that has only low activity with other monosaccharides. Can mediate the uptake of deoxyglucose, but with low efficiency. Essential for fructose uptake in the small intestine. Plays a role in the regulation of salt uptake and blood pressure in response to dietary fructose. Required for the development of high blood pressure in response to high dietary fructose intake. The chain is Solute carrier family 2, facilitated glucose transporter member 5 from Ovis aries (Sheep).